The following is a 546-amino-acid chain: Membrane protein insertase YidC (546 aa).

Residues Ile-8–Thr-28 form a helical membrane-spanning segment. The disordered stretch occupies residues Ala-31–Glu-70. Positions Pro-39–Ala-60 are enriched in low complexity. 5 helical membrane-spanning segments follow: residues Ile-326–Met-346, Trp-356–Tyr-376, Leu-422–Leu-442, Leu-459–Met-479, and Phe-498–Ile-518.

This sequence belongs to the OXA1/ALB3/YidC family. Type 1 subfamily. As to quaternary structure, interacts with the Sec translocase complex via SecD. Specifically interacts with transmembrane segments of nascent integral membrane proteins during membrane integration.

The protein resides in the cell inner membrane. Its function is as follows. Required for the insertion and/or proper folding and/or complex formation of integral membrane proteins into the membrane. Involved in integration of membrane proteins that insert both dependently and independently of the Sec translocase complex, as well as at least some lipoproteins. Aids folding of multispanning membrane proteins. This chain is Membrane protein insertase YidC, found in Anaeromyxobacter dehalogenans (strain 2CP-1 / ATCC BAA-258).